We begin with the raw amino-acid sequence, 255 residues long: Dehydrogenase/reductase SDR family member 11 (255 aa).

An N-terminal signal peptide occupies residues 1-25 (MERWRDRLALVTGASGGIGAAVARA). NADP(+) contacts are provided by residues 13-18 (GASGGI), 38-39 (RT), E44, 65-66 (DL), and N92. Substrate-binding residues include S146 and Y161. Residues Y161, K165, 196–199 (VETQ), and K203 each bind NADP(+). Y161 (proton acceptor) is an active-site residue.

The protein belongs to the short-chain dehydrogenases/reductases (SDR) family.

Its subcellular location is the secreted. The enzyme catalyses a 3beta-hydroxysteroid + NADP(+) = a 3-oxosteroid + NADPH + H(+). The catalysed reaction is 17beta-estradiol + NAD(+) = estrone + NADH + H(+). It carries out the reaction 17beta-estradiol + NADP(+) = estrone + NADPH + H(+). The protein operates within steroid biosynthesis; estrogen biosynthesis. Inhibited by flavonoids including apigenin, luteolin, genistein, kaempferol and quercetin and also by carbenoxolone, zearalenone, glycyrrhetinic, curcumin and flufenamic acid. Functionally, catalyzes the conversion of the 17-keto group of estrone, 4- and 5-androstenes and 5-alpha-androstanes into their 17-beta-hydroxyl metabolites and the conversion of the 3-keto group of 3-, 3,17- and 3,20- diketosteroids into their 3-hydroxyl metabolites. Exhibits reductive 3-beta-hydroxysteroid dehydrogenase activity toward 5-beta-androstanes, 5-beta-pregnanes, 4-pregnenes and bile acids. May also reduce endogenous and exogenous alpha-dicarbonyl compounds and xenobiotic alicyclic ketones. This Bos taurus (Bovine) protein is Dehydrogenase/reductase SDR family member 11 (DHRS11).